We begin with the raw amino-acid sequence, 294 residues long: Probable aspartoacylase (294 aa).

Residues His14 and Glu17 each coordinate Zn(2+). Substrate is bound by residues Arg56 and 63–64 (NR). His106 contacts Zn(2+). Substrate-binding residues include Glu164 and Tyr275.

This sequence belongs to the AspA/AstE family. Aspartoacylase subfamily. The cofactor is Zn(2+).

The enzyme catalyses an N-acyl-L-aspartate + H2O = a carboxylate + L-aspartate. This Nostoc sp. (strain PCC 7120 / SAG 25.82 / UTEX 2576) protein is Probable aspartoacylase.